A 398-amino-acid chain; its full sequence is Phosphoglycerate kinase (398 aa).

Residues D23 to N25, R38, H61 to R64, R120, and R153 each bind substrate. ATP is bound by residues K203, E325, and G355–T358.

Belongs to the phosphoglycerate kinase family. In terms of assembly, monomer.

It is found in the cytoplasm. It catalyses the reaction (2R)-3-phosphoglycerate + ATP = (2R)-3-phospho-glyceroyl phosphate + ADP. Its pathway is carbohydrate degradation; glycolysis; pyruvate from D-glyceraldehyde 3-phosphate: step 2/5. In Chelativorans sp. (strain BNC1), this protein is Phosphoglycerate kinase.